Reading from the N-terminus, the 196-residue chain is T-cell surface glycoprotein CD3 epsilon chain (196 aa).

Residues 1-21 (MPSGNLWKVLGLCLLSVGAWG) form the signal peptide. Residues 22–116 (QEDIERPDED…VCENCVEVDL (95 aa)) lie on the Extracellular side of the membrane. The region spanning 28–102 (PDEDTQKTFK…VGEKTSHRLY (75 aa)) is the Ig-like domain. A disulfide bridge connects residues cysteine 49 and cysteine 91. The helical transmembrane segment at 117-137 (MAVVTIIVVDICITLGLLMVV) threads the bilayer. The Cytoplasmic segment spans residues 138–196 (YYYSKSRKAKAMPVTRGAGAGGRPRGQNRERPPPVPNPDYEPIRKGQRDLYSGLNQRGR). The segment at 150-196 (PVTRGAGAGGRPRGQNRERPPPVPNPDYEPIRKGQRDLYSGLNQRGR) is disordered. Positions 164 to 181 (QNRERPPPVPNPDYEPIR) are NUMB-binding region. The 28-residue stretch at 167–194 (ERPPPVPNPDYEPIRKGQRDLYSGLNQR) folds into the ITAM domain. A proline-rich sequence region spans residues 168-175 (RPPPVPNP). 2 positions are modified to phosphotyrosine: tyrosine 177 and tyrosine 188.

The TCR-CD3 complex is composed of a CD3D/CD3E and a CD3G/CD3E heterodimers that preferentially associate with TCRalpha and TCRbeta, respectively, to form TCRalpha/CD3E/CD3G and TCRbeta/CD3G/CD3E trimers. In turn, the hexamer interacts with CD3Z homodimer to form the TCR-CD3 complex. Alternatively, TCRalpha and TCRbeta can be replaced by TCRgamma and TCRdelta. Interacts with CD6. Interacts (via Proline-rich sequence) with NCK1; the interaction is ligand dependent but independent of tyrosine kinase activation. Phosphorylated on Tyr residues after T-cell receptor triggering by LCK in association with CD4/CD8.

Its subcellular location is the cell membrane. Functionally, part of the TCR-CD3 complex present on T-lymphocyte cell surface that plays an essential role in adaptive immune response. When antigen presenting cells (APCs) activate T-cell receptor (TCR), TCR-mediated signals are transmitted across the cell membrane by the CD3 chains CD3D, CD3E, CD3G and CD3Z. All CD3 chains contain immunoreceptor tyrosine-based activation motifs (ITAMs) in their cytoplasmic domain. Upon TCR engagement, these motifs become phosphorylated by Src family protein tyrosine kinases LCK and FYN, resulting in the activation of downstream signaling pathways. In addition of this role of signal transduction in T-cell activation, CD3E plays an essential role in correct T-cell development. Also participates in internalization and cell surface down-regulation of TCR-CD3 complexes via endocytosis sequences present in CD3E cytosolic region. In addition to its role as a TCR coreceptor, it serves as a receptor for ITPRIPL1. Ligand recognition inhibits T-cell activation by promoting interaction with NCK1, which prevents CD3E-ZAP70 interaction and blocks the ERK-NFkB signaling cascade and calcium influx. The protein is T-cell surface glycoprotein CD3 epsilon chain (CD3E) of Sus scrofa (Pig).